The primary structure comprises 180 residues: UPF0149 protein XOO1028 (180 aa).

This sequence belongs to the UPF0149 family.

This Xanthomonas oryzae pv. oryzae (strain MAFF 311018) protein is UPF0149 protein XOO1028.